Here is a 235-residue protein sequence, read N- to C-terminus: Tetraspanin-8 (235 aa).

At 1 to 12 the chain is on the cytoplasmic side; sequence MAGVSSCLKYSM. A helical transmembrane segment spans residues 13–33; sequence FFFNFLFWVCGTLILGLAIWV. The Extracellular segment spans residues 34-52; that stretch reads RVSKDGKEIITSGDSSTNP. The chain crosses the membrane as a helical span at residues 53 to 73; the sequence is FIAVNILIAVGSIIMVLGFLG. The Cytoplasmic segment spans residues 74-84; the sequence is CCGAVKESRCM. Residues 85–105 traverse the membrane as a helical segment; the sequence is LLLFFIGLLLILILQVAAGIL. Topologically, residues 106-203 are extracellular; it reads GAAFKPEYNR…SLIKDLFEKN (98 aa). Asn118 carries N-linked (GlcNAc...) asparagine glycosylation. Residues 204 to 224 traverse the membrane as a helical segment; that stretch reads IIIVIGIAFGLAVIEILGLVF. At 225–235 the chain is on the cytoplasmic side; sequence SMVLYCQIGSK.

The protein belongs to the tetraspanin (TM4SF) family. As to quaternary structure, forms homooligomers. Interacts with MEP1B. Interacts with integrin alpha3/ITGA3. Interacts with RICTOR and MTOR. Interacts with ADAM17. Interacts with ECE1.

The protein localises to the cell membrane. Functionally, structural component of specialized membrane microdomains known as tetraspanin-enriched microdomains (TERMs), which act as platforms for receptor clustering and signaling. Participates thereby in diverse biological functions such as cell signal transduction, migration and protein trafficking. Promotes ADAM17-mediated TNF-alpha processing through recruitment of ADAM17 to tetraspanin-enriched micro-domains (TEMs). Forms a complex with RICTOR and integrin alpha3/ITGA3 to mediate mTORC2 activation and AKT1 phosphorylation leading to cell migration. Reduces apoptosis and autophagy induced by high glucose levels through forming a complex with mTOR and RICTOR. Contributes to the maintenance of intestinal epithelial barrier and plays a role in the regulation of intestine inflammation by switching interferon gamma receptor 1/IFNGR1 from clathrin-dependent to lipid raft-dependent endocytosis route to limit STAT1 activation magnitude and duration. Acts as a modulator of the endothelin axis by associating with endothelin converting enzyme ECE1 and regulating its activity of conversion of the endothelin-1 precursor to endothelin. The polypeptide is Tetraspanin-8 (Tspan8) (Mus musculus (Mouse)).